A 372-amino-acid chain; its full sequence is 3,5-dihydroxyphenylacetyl-CoA synthase (372 aa).

Cys-160 is a catalytic residue.

It belongs to the thiolase-like superfamily. Chalcone/stilbene synthases family.

It catalyses the reaction 4 malonyl-CoA + 4 H(+) = (3,5-dihydroxyphenyl)acetyl-CoA + 4 CO2 + 3 CoA + H2O. Its pathway is antibiotic biosynthesis. Its function is as follows. Involved in the biosynthesis of the nonproteinogenic amino acid monomer (S)-3,5-dihydroxyphenylglycine (Dpg) responsible of the production of balhimycin antibiotic. Catalyzes the Claisen condensation of four molecules of malonyl-CoA to yield 3,5-dihydroxyphenylacetyl-CoA (DPA-CoA) and three free coenzyme A (CoA). DpgA requires the presence of the dehydratases DpgB and DpgD to facilitate the aromatization of the DPA-S-DgpA or DPA-S-CoA intermediate. The chain is 3,5-dihydroxyphenylacetyl-CoA synthase from Amycolatopsis balhimycina.